The primary structure comprises 67 residues: Prokaryotic ubiquitin-like protein Pup (67 aa).

The interval 1 to 26 (MATKETGGQKHATRRNQEVEEIEVTT) is disordered. The ARC ATPase binding stretch occupies residues 23 to 61 (EVTTETSVRNEKLAEDVDDILDEIDEVLESNAEDFVRQF). A coiled-coil region spans residues 27 to 55 (ETSVRNEKLAEDVDDILDEIDEVLESNAE). Residue E67 forms an Isoglutamyl lysine isopeptide (Glu-Lys) (interchain with K-? in acceptor proteins) linkage.

It belongs to the prokaryotic ubiquitin-like protein family. Strongly interacts with the proteasome-associated ATPase ARC through a hydrophobic interface; the interacting region of Pup lies in its C-terminal half. There is one Pup binding site per ARC hexamer ring.

It functions in the pathway protein degradation; proteasomal Pup-dependent pathway. In terms of biological role, protein modifier that is covalently attached to lysine residues of substrate proteins, thereby targeting them for proteasomal degradation. The tagging system is termed pupylation. This is Prokaryotic ubiquitin-like protein Pup from Thermobifida fusca (strain YX).